Reading from the N-terminus, the 334-residue chain is Putative heat shock protein HSP 90-alpha A5 (334 aa).

The interval 55–107 (KRNKQVSDAEAEKKEDKRKKKKESNDKPEIEDVGSDEEEEKKDADKKKKKSKE) is disordered. The segment covering 59 to 69 (QVSDAEAEKKE) has biased composition (basic and acidic residues). The segment covering 85 to 94 (EDVGSDEEEE) has biased composition (acidic residues). The residue at position 89 (Ser-89) is a Phosphoserine. Residues 234-267 (LELPEDEEEKKKQEEKKTKFENLCKIMKDMLEKK) adopt a coiled-coil conformation. Positions 314–334 (EMPPLRGGDDTSRMEEVGGSG) are disordered. The segment covering 320–334 (GGDDTSRMEEVGGSG) has biased composition (basic and acidic residues). The TPR repeat-binding signature appears at 327-331 (MEEVG).

It belongs to the heat shock protein 90 family. As to quaternary structure, homodimer.

The protein localises to the cytoplasm. Putative molecular chaperone that may promote the maturation, structural maintenance and proper regulation of specific target proteins. This chain is Putative heat shock protein HSP 90-alpha A5 (HSP90AA5P), found in Homo sapiens (Human).